The following is a 178-amino-acid chain: Acireductone dioxygenase (178 aa).

Fe(2+)-binding residues include H100, H102, E106, and H145. H100, H102, E106, and H145 together coordinate Ni(2+).

The protein belongs to the acireductone dioxygenase (ARD) family. Monomer. Fe(2+) serves as cofactor. It depends on Ni(2+) as a cofactor.

It carries out the reaction 1,2-dihydroxy-5-(methylsulfanyl)pent-1-en-3-one + O2 = 3-(methylsulfanyl)propanoate + CO + formate + 2 H(+). It catalyses the reaction 1,2-dihydroxy-5-(methylsulfanyl)pent-1-en-3-one + O2 = 4-methylsulfanyl-2-oxobutanoate + formate + 2 H(+). The protein operates within amino-acid biosynthesis; L-methionine biosynthesis via salvage pathway; L-methionine from S-methyl-5-thio-alpha-D-ribose 1-phosphate: step 5/6. Functionally, catalyzes 2 different reactions between oxygen and the acireductone 1,2-dihydroxy-3-keto-5-methylthiopentene (DHK-MTPene) depending upon the metal bound in the active site. Fe-containing acireductone dioxygenase (Fe-ARD) produces formate and 2-keto-4-methylthiobutyrate (KMTB), the alpha-ketoacid precursor of methionine in the methionine recycle pathway. Ni-containing acireductone dioxygenase (Ni-ARD) produces methylthiopropionate, carbon monoxide and formate, and does not lie on the methionine recycle pathway. In Bacillus subtilis (strain 168), this protein is Acireductone dioxygenase (mtnD).